Consider the following 291-residue polypeptide: Phosphate import ATP-binding protein PstB (291 aa).

The ABC transporter domain maps to 45–286 (YSTQNLDLWY…PADKQTEDYI (242 aa)). Position 77-84 (77-84 (GPSGCGKS)) interacts with ATP.

The protein belongs to the ABC transporter superfamily. Phosphate importer (TC 3.A.1.7) family. As to quaternary structure, the complex is composed of two ATP-binding proteins (PstB), two transmembrane proteins (PstC and PstA) and a solute-binding protein (PstS).

The protein localises to the cell membrane. The enzyme catalyses phosphate(out) + ATP + H2O = ADP + 2 phosphate(in) + H(+). In terms of biological role, part of the ABC transporter complex PstSACB involved in phosphate import. Responsible for energy coupling to the transport system. This Staphylococcus epidermidis (strain ATCC 35984 / DSM 28319 / BCRC 17069 / CCUG 31568 / BM 3577 / RP62A) protein is Phosphate import ATP-binding protein PstB.